The chain runs to 484 residues: tRNA sulfurtransferase (484 aa).

The THUMP domain maps to 63-167 (QAFGERLACI…RDNLYMVTKR (105 aa)). ATP contacts are provided by residues 185–186 (LI), Lys267, Gly289, and Gln298. A disulfide bond links Cys346 and Cys458. Positions 406–484 (IDTNQVVIDI…GYTNVKVYRP (79 aa)) constitute a Rhodanese domain. The active-site Cysteine persulfide intermediate is Cys458.

Belongs to the ThiI family.

It is found in the cytoplasm. It carries out the reaction [ThiI sulfur-carrier protein]-S-sulfanyl-L-cysteine + a uridine in tRNA + 2 reduced [2Fe-2S]-[ferredoxin] + ATP + H(+) = [ThiI sulfur-carrier protein]-L-cysteine + a 4-thiouridine in tRNA + 2 oxidized [2Fe-2S]-[ferredoxin] + AMP + diphosphate. It catalyses the reaction [ThiS sulfur-carrier protein]-C-terminal Gly-Gly-AMP + S-sulfanyl-L-cysteinyl-[cysteine desulfurase] + AH2 = [ThiS sulfur-carrier protein]-C-terminal-Gly-aminoethanethioate + L-cysteinyl-[cysteine desulfurase] + A + AMP + 2 H(+). The protein operates within cofactor biosynthesis; thiamine diphosphate biosynthesis. Catalyzes the ATP-dependent transfer of a sulfur to tRNA to produce 4-thiouridine in position 8 of tRNAs, which functions as a near-UV photosensor. Also catalyzes the transfer of sulfur to the sulfur carrier protein ThiS, forming ThiS-thiocarboxylate. This is a step in the synthesis of thiazole, in the thiamine biosynthesis pathway. The sulfur is donated as persulfide by IscS. This is tRNA sulfurtransferase from Shewanella baltica (strain OS155 / ATCC BAA-1091).